The chain runs to 156 residues: Endoribonuclease YbeY (156 aa).

Zn(2+) is bound by residues H122, H126, and H132.

This sequence belongs to the endoribonuclease YbeY family. The cofactor is Zn(2+).

Its subcellular location is the cytoplasm. Functionally, single strand-specific metallo-endoribonuclease involved in late-stage 70S ribosome quality control and in maturation of the 3' terminus of the 16S rRNA. In Bacillus cereus (strain ZK / E33L), this protein is Endoribonuclease YbeY.